Reading from the N-terminus, the 145-residue chain is Plastocyanin, chloroplastic (145 aa).

A chloroplast-targeting transit peptide spans 1–47; it reads MKATLRAPASRASAVRPVASLKAAAQRVASVAGVSVASLALTLAAHA. The region spanning 48–145 is the Plastocyanin-like domain; it reads DATVKLGADS…AGMVGKIIVQ (98 aa). 4 residues coordinate Cu cation: His-85, Cys-130, His-133, and Met-138.

It belongs to the plastocyanin family. Cu(2+) serves as cofactor.

It localises to the plastid. Its subcellular location is the chloroplast thylakoid membrane. Functionally, participates in electron transfer between P700 and the cytochrome b6-f complex in photosystem I. In Chlamydomonas reinhardtii (Chlamydomonas smithii), this protein is Plastocyanin, chloroplastic (PETE).